Reading from the N-terminus, the 162-residue chain is Lipoprotein signal peptidase (162 aa).

Transmembrane regions (helical) follow at residues tryptophan 12 to glutamine 32, tryptophan 70 to serine 90, and alanine 102 to valine 122. Active-site residues include aspartate 123 and aspartate 141. A helical membrane pass occupies residues phenylalanine 137–leucine 157.

Belongs to the peptidase A8 family.

The protein localises to the cell inner membrane. It catalyses the reaction Release of signal peptides from bacterial membrane prolipoproteins. Hydrolyzes -Xaa-Yaa-Zaa-|-(S,diacylglyceryl)Cys-, in which Xaa is hydrophobic (preferably Leu), and Yaa (Ala or Ser) and Zaa (Gly or Ala) have small, neutral side chains.. It functions in the pathway protein modification; lipoprotein biosynthesis (signal peptide cleavage). Functionally, this protein specifically catalyzes the removal of signal peptides from prolipoproteins. The chain is Lipoprotein signal peptidase from Citrobacter koseri (strain ATCC BAA-895 / CDC 4225-83 / SGSC4696).